The primary structure comprises 357 residues: Glycerol-3-phosphate dehydrogenase [NAD(P)+] (357 aa).

Residues serine 12, tryptophan 13, histidine 33, and lysine 115 each coordinate NADPH. Sn-glycerol 3-phosphate contacts are provided by lysine 115, glycine 149, and serine 151. Position 153 (glycine 153) interacts with NADPH. 4 residues coordinate sn-glycerol 3-phosphate: lysine 204, aspartate 263, arginine 274, and asparagine 275. The Proton acceptor role is filled by lysine 204. Arginine 274 serves as a coordination point for NADPH. Residues leucine 307 and glutamate 309 each coordinate NADPH.

Belongs to the NAD-dependent glycerol-3-phosphate dehydrogenase family.

The protein resides in the cytoplasm. The enzyme catalyses sn-glycerol 3-phosphate + NAD(+) = dihydroxyacetone phosphate + NADH + H(+). It carries out the reaction sn-glycerol 3-phosphate + NADP(+) = dihydroxyacetone phosphate + NADPH + H(+). Its pathway is membrane lipid metabolism; glycerophospholipid metabolism. In terms of biological role, catalyzes the reduction of the glycolytic intermediate dihydroxyacetone phosphate (DHAP) to sn-glycerol 3-phosphate (G3P), the key precursor for phospholipid synthesis. The protein is Glycerol-3-phosphate dehydrogenase [NAD(P)+] of Treponema denticola (strain ATCC 35405 / DSM 14222 / CIP 103919 / JCM 8153 / KCTC 15104).